The sequence spans 647 residues: Solute carrier family 23 member 2 (647 aa).

A compositionally biased stretch (polar residues) spans 1–11; sequence MMGVGKNTSKS. The segment at 1 to 26 is disordered; sequence MMGVGKNTSKSVEVGGSTEGKYEEEA. Residues 8 to 109 are Cytoplasmic-facing; it reads TSKSVEVGGS…LCIFLGLQHY (102 aa). S69 carries the phosphoserine modification. T74 is modified (phosphothreonine). S77 carries the post-translational modification Phosphoserine. A Phosphothreonine modification is found at T78. S80 is modified (phosphoserine). A helical transmembrane segment spans residues 110-130; the sequence is LTCFSGTIAVPFLLADAMCVG. Residues 131 to 138 are Extracellular-facing; that stretch reads DDQWATSQ. Residues 139-159 traverse the membrane as a helical segment; it reads LIGTIFFCVGITTLLQTTFGC. Position 160 (R160) is a topological domain, cytoplasmic. A helical membrane pass occupies residues 161–181; sequence LPLFQASAFAFLAPARAILSL. Over 182-215 the chain is Extracellular; sequence DKWKCNTTEITVANGTAELLEHIWHPRIQEIQGA. N187 and N195 each carry an N-linked (GlcNAc...) asparagine glycan. The helical transmembrane segment at 216–236 threads the bilayer; the sequence is IIMSSLIEVVIGLLGLPGALL. The Cytoplasmic segment spans residues 237–263; sequence RYIGPLTITPTVALIGLSGFQAAGERA. The chain crosses the membrane as a helical span at residues 264 to 281; sequence GKHWGIAMLTIFLVLLFS. Residues 282-285 lie on the Extracellular side of the membrane; the sequence is QYAR. The helical intramembrane region spans 286 to 299; that stretch reads NVKFPLPIYKSKKG. The Extracellular portion of the chain corresponds to 300-306; sequence WTAYKLQ. Residues 307-327 traverse the membrane as a helical segment; sequence LFKMFPIILAILVSWLLCFIF. Residues 328 to 368 are Cytoplasmic-facing; it reads TVTDVFPSNSTDYGYYARTDARKGVLLVAPWFKVPYPFQWG. Residues 369-389 form a helical membrane-spanning segment; sequence MPTVSAAGVIGMLSAVVASII. Residues 390 to 414 lie on the Extracellular side of the membrane; that stretch reads ESIGDYYACARLSCAPPPPIHAINR. The chain crosses the membrane as a helical span at residues 415–435; sequence GIFVEGLSCVLDGVFGTGNGS. At 436–458 the chain is on the cytoplasmic side; that stretch reads TSSSPNIGVLGITKVGSRRVIQY. Residues 459–479 traverse the membrane as a helical segment; that stretch reads GAALMLGLGMIGKFSALFASL. Over 480–482 the chain is Extracellular; the sequence is PDP. A helical membrane pass occupies residues 483 to 503; that stretch reads VLGALFCTLFGMITAVGLSNL. Topologically, residues 504–513 are cytoplasmic; it reads QFIDLNSSRN. Residues 514–534 traverse the membrane as a helical segment; that stretch reads LFVLGFSIFFGLVLPSYLRQN. The Extracellular portion of the chain corresponds to 535–544; it reads PLVTGITGID. Residues 545–565 form a helical membrane-spanning segment; the sequence is QVLNVLLTTAMFVGGCVAFIL. Residues 566-647 lie on the Cytoplasmic side of the membrane; the sequence is DNTIPGTPEE…SSDKDSQATV (82 aa). T646 carries the post-translational modification Phosphothreonine.

The protein belongs to the nucleobase:cation symporter-2 (NCS2) (TC 2.A.40) family. Interacts with CLSTN3. Phosphorylated. As to expression, highly expressed in neural, neuroendocrine, exocrine and endothelial tissues and in osteoblasts. Detected in neurons throughout the central nervous system, in meninges and choroid plexus, in the anterior pituitary, the intermediate lobe, in pancreas, adrenal cortex, gastric glands, and in the inner nuclear layer of the retina.

It localises to the cell membrane. It carries out the reaction L-ascorbate(out) + 2 Na(+)(out) = L-ascorbate(in) + 2 Na(+)(in). Its function is as follows. Sodium/ascorbate cotransporter. Mediates electrogenic uptake of vitamin C, with a stoichiometry of 2 Na(+) for each ascorbate. The polypeptide is Solute carrier family 23 member 2 (Slc23a2) (Rattus norvegicus (Rat)).